The following is a 20-amino-acid chain: Phospholipase A2 D5 (20 aa).

The cofactor is Ca(2+). Post-translationally, contains seven disulfide bonds. In terms of tissue distribution, expressed by the venom gland.

It localises to the secreted. The enzyme catalyses a 1,2-diacyl-sn-glycero-3-phosphocholine + H2O = a 1-acyl-sn-glycero-3-phosphocholine + a fatty acid + H(+). In terms of biological role, PLA2 catalyzes the calcium-dependent hydrolysis of the 2-acyl groups in 3-sn-phosphoglycerides. The chain is Phospholipase A2 D5 from Micrurus pyrrhocryptus (Coral snake).